A 276-amino-acid chain; its full sequence is Large ribosomal subunit protein uL2 (276 aa).

Disordered regions lie at residues 1 to 20 and 219 to 276; these read MGIK…TTND and TVRG…RRKK. Polar residues predominate over residues 7–20; the sequence is NPTTNGRRNMTTND.

It belongs to the universal ribosomal protein uL2 family. In terms of assembly, part of the 50S ribosomal subunit. Forms a bridge to the 30S subunit in the 70S ribosome.

One of the primary rRNA binding proteins. Required for association of the 30S and 50S subunits to form the 70S ribosome, for tRNA binding and peptide bond formation. It has been suggested to have peptidyltransferase activity; this is somewhat controversial. Makes several contacts with the 16S rRNA in the 70S ribosome. This chain is Large ribosomal subunit protein uL2, found in Bacillus cereus (strain Q1).